Consider the following 170-residue polypeptide: dCTP pyrophosphatase 1 (170 aa).

The segment at 1–25 (MSTAGDGERGTVGQEDSAAARPFRF) is disordered. Ser2 is modified (N-acetylserine). Ser2 is modified (phosphoserine). Residues His38 and 47-51 (WEQFH) each bind substrate. Mg(2+)-binding residues include Glu63 and Glu66. Trp73 provides a ligand contact to substrate. Residues Glu95 and Asp98 each coordinate Mg(2+). Residue Tyr102 coordinates substrate. The segment at 150–170 (SENQAVGAGDPASELRDQAST) is disordered.

Homotetramer. Mg(2+) serves as cofactor. As to expression, ubiquitous. Highly expressed in heart, liver, skeletal muscle, cerebellum, brain, and salivary gland.

The protein localises to the cytoplasm. The protein resides in the cytosol. It carries out the reaction dCTP + H2O = dCMP + diphosphate + H(+). Its activity is regulated as follows. Inhibited by divalent calcium or cadmium ions. Hydrolyzes deoxynucleoside triphosphates (dNTPs) to the corresponding nucleoside monophosphates. Has a strong preference for dCTP and its analogs including 5-iodo-dCTP and 5-methyl-dCTP for which it may even have a higher efficiency. May protect DNA or RNA against the incorporation of these genotoxic nucleotide analogs through their catabolism. The sequence is that of dCTP pyrophosphatase 1 from Mus musculus (Mouse).